The chain runs to 158 residues: NADH-quinone oxidoreductase subunit B (158 aa).

Cys-37, Cys-38, Cys-102, and Cys-132 together coordinate [4Fe-4S] cluster.

It belongs to the complex I 20 kDa subunit family. In terms of assembly, NDH-1 is composed of 14 different subunits. Subunits NuoB, C, D, E, F, and G constitute the peripheral sector of the complex. The cofactor is [4Fe-4S] cluster.

The protein resides in the cell inner membrane. The catalysed reaction is a quinone + NADH + 5 H(+)(in) = a quinol + NAD(+) + 4 H(+)(out). In terms of biological role, NDH-1 shuttles electrons from NADH, via FMN and iron-sulfur (Fe-S) centers, to quinones in the respiratory chain. Couples the redox reaction to proton translocation (for every two electrons transferred, four hydrogen ions are translocated across the cytoplasmic membrane), and thus conserves the redox energy in a proton gradient. The chain is NADH-quinone oxidoreductase subunit B from Bordetella parapertussis (strain 12822 / ATCC BAA-587 / NCTC 13253).